Reading from the N-terminus, the 70-residue chain is Small ribosomal subunit protein bS21C (70 aa).

It belongs to the bacterial ribosomal protein bS21 family.

The protein is Small ribosomal subunit protein bS21C of Burkholderia pseudomallei (strain 1710b).